A 56-amino-acid chain; its full sequence is Large ribosomal subunit protein bL33 (56 aa).

It belongs to the bacterial ribosomal protein bL33 family.

This is Large ribosomal subunit protein bL33 from Anaplasma marginale (strain Florida).